We begin with the raw amino-acid sequence, 177 residues long: Actinorhodin polyketide dimerase (177 aa).

It to S.pristinaespiralis SnaC.

It participates in antibiotic biosynthesis; actinorhodin biosynthesis. This Streptomyces coelicolor (strain ATCC BAA-471 / A3(2) / M145) protein is Actinorhodin polyketide dimerase (actVB).